The sequence spans 472 residues: Gamma-aminobutyric acid receptor subunit beta-2 (472 aa).

The signal sequence occupies residues 1–23 (RVRKKDYFGIWSFPLIIAAVCAQ). At 24–239 (SVNDPSNMSL…LSLSFKLKRN (216 aa)) the chain is on the extracellular side. 2 N-linked (GlcNAc...) asparagine glycosylation sites follow: Asn30 and Asn102. Histamine is bound at residue Tyr119. Cys158 and Cys172 are oxidised to a cystine. Histamine contacts are provided by residues 178–179 (SY) and Thr224. The 4-aminobutanoate site is built by Tyr179 and Thr224. 3 helical membrane passes run 240 to 260 (IGYFILQTYMPSILITILSWV), 271 to 290 (ARVALGITTVLTMTTINTHL), and 309 to 329 (GCFVFVFMALLEYALVNYIFF). The tract at residues 287–308 (NTHLRETLPKIPYVKAIDMYLM) is etomidate binding; allosteric effector. The Cytoplasmic portion of the chain corresponds to 330–450 (GRGPQRQKKA…LTDVNAIDRW (121 aa)). Residue Tyr401 is modified to Phosphotyrosine. The chain crosses the membrane as a helical span at residues 451-471 (SRIFFPVVFSFFNIVYWLYYV).

It belongs to the ligand-gated ion channel (TC 1.A.9) family. Gamma-aminobutyric acid receptor (TC 1.A.9.5) subfamily. GABRB2 sub-subfamily. As to quaternary structure, heteropentamer, formed by a combination of alpha (GABRA1-6), beta (GABRB1-3), gamma (GABRG1-3), delta (GABRD), epsilon (GABRE), rho (GABRR1-3), pi (GABRP) and theta (GABRQ) chains, each subunit exhibiting distinct physiological and pharmacological properties. Interacts with UBQLN1. May interact with KIF21B. Identified in a complex of 720 kDa composed of LHFPL4, NLGN2, GABRA1, GABRB2, GABRG2 and GABRB3. In terms of processing, glycosylated.

The protein localises to the postsynaptic cell membrane. It is found in the cell membrane. The protein resides in the cytoplasmic vesicle membrane. The enzyme catalyses chloride(in) = chloride(out). With respect to regulation, allosterically activated by benzodiazepines. Allosterically activated by the anesthetic etomidate. Inhibited by the antagonist bicuculline. Potentiated by histamine. Its function is as follows. Beta subunit of the heteropentameric ligand-gated chloride channel gated by gamma-aminobutyric acid (GABA), a major inhibitory neurotransmitter in the brain. GABA-gated chloride channels, also named GABA(A) receptors (GABAAR), consist of five subunits arranged around a central pore and contain GABA active binding site(s) located at the alpha and beta subunit interface(s). When activated by GABA, GABAARs selectively allow the flow of chloride anions across the cell membrane down their electrochemical gradient. Chloride influx into the postsynaptic neuron following GABAAR opening decreases the neuron ability to generate a new action potential, thereby reducing nerve transmission. GABAARs containing alpha-1 and beta-2 or -3 subunits exhibit synaptogenic activity; the gamma-2 subunit being necessary but not sufficient to induce rapid synaptic contacts formation. Extrasynaptic beta-2 receptors contribute to the tonic GABAergic inhibition. Beta-containing GABAARs can simultaneously bind GABA and histamine where histamine binds at the interface of two neighboring beta subunits, which may be involved in the regulation of sleep and wakefulness. The sequence is that of Gamma-aminobutyric acid receptor subunit beta-2 (GABRB2) from Bos taurus (Bovine).